Consider the following 89-residue polypeptide: Albumin-1 (89 aa).

Residue Ala1 is a signal peptide. Intrachain disulfides connect Cys4/Cys21, Cys8/Cys23, and Cys16/Cys33. A propeptide spanning residues 39-46 (LSSVAKMI) is cleaved from the precursor.

Post-translationally, the C-terminal glycine may be removed from A1b.

Functionally, A1b binds to basic 7S globulin (BG) and stimulates its phosphorylation activity. The chain is Albumin-1 (LEG) from Vigna radiata var. radiata (Mung bean).